The chain runs to 188 residues: Putative manganese efflux pump MntP (188 aa).

The next 6 membrane-spanning stretches (helical) occupy residues 3–23, 39–59, 65–85, 104–124, 125–145, and 167–187; these read WLTILGISVALAMDAFAVALA, LGFHFGLFQALMPIGGWLLGM, ISAYDHWIAFGLLAYVGGRMV, GMTMVMLSVATSIDAFAVGLS, IAMLGVSVWLPATVIGLVAGV, and ICGGLVLCLIGLKILLEHTLL.

It belongs to the MntP (TC 9.B.29) family.

It is found in the cell inner membrane. Functionally, probably functions as a manganese efflux pump. In Citrifermentans bemidjiense (strain ATCC BAA-1014 / DSM 16622 / JCM 12645 / Bem) (Geobacter bemidjiensis), this protein is Putative manganese efflux pump MntP.